Reading from the N-terminus, the 941-residue chain is Pre-mRNA-processing factor 6 (941 aa).

The interval 1–79 (MNKKKKPFLG…DEDLNDTNYD (79 aa)) is disordered. Over residues 39–65 (DANDPVDDRHAPPGKRTVGDQMKKNQA) the composition is skewed to basic and acidic residues. The span at 66–78 (ADDDDEDLNDTNY) shows a compositional bias: acidic residues. Ser143 carries the phosphoserine modification. Thr180, Thr266, and Thr275 each carry phosphothreonine. Ser279 carries the phosphoserine modification. HAT repeat units follow at residues 384–416 (TDIR…LEEP), 418–444 (DARI…ARLE), 445–476 (TYEN…LEEA), 554–586 (NALE…FEKN), 588–620 (GTRE…SKWL), 622–654 (GDVP…LESE), 689–721 (GNIT…IEEQ), 723–755 (ELME…LEEK), and 855–887 (RKIT…FELQ).

In terms of assembly, identified in the spliceosome B complex. Identified in the spliceosome C complex. Associates with the U5 snRNP particle. Component of the U4/U6-U5 tri-snRNP complex composed of the U4, U6 and U5 snRNAs and at least PRPF3, PRPF4, PRPF6, PRPF8, PRPF31, SNRNP200, TXNL4A, SNRNP40, DDX23, CD2BP2, PPIH, SNU13, EFTUD2, SART1 and USP39, LSm proteins LSm2-8 and Sm proteins. Interacts with ARAF1. Interacts with AR and NR3C1, but not ESR1, independently of the presence of hormones. Interacts with USH1G. Phosphorylated by PRP4K during spliceosome assembly.

The protein localises to the nucleus. It is found in the nucleoplasm. It localises to the nucleus speckle. Involved in pre-mRNA splicing as component of the U4/U6-U5 tri-snRNP complex, one of the building blocks of the spliceosome. Enhances dihydrotestosterone-induced transactivation activity of AR, as well as dexamethasone-induced transactivation activity of NR3C1, but does not affect estrogen-induced transactivation. The protein is Pre-mRNA-processing factor 6 (Prpf6) of Rattus norvegicus (Rat).